A 160-amino-acid polypeptide reads, in one-letter code: Cyclic pyranopterin monophosphate synthase (160 aa).

Residues Leu76–His78 and Met114–Glu115 contribute to the substrate site. Residue Asp129 is part of the active site.

This sequence belongs to the MoaC family. Homohexamer; trimer of dimers.

The catalysed reaction is (8S)-3',8-cyclo-7,8-dihydroguanosine 5'-triphosphate = cyclic pyranopterin phosphate + diphosphate. The protein operates within cofactor biosynthesis; molybdopterin biosynthesis. Its function is as follows. Catalyzes the conversion of (8S)-3',8-cyclo-7,8-dihydroguanosine 5'-triphosphate to cyclic pyranopterin monophosphate (cPMP). This chain is Cyclic pyranopterin monophosphate synthase, found in Saccharophagus degradans (strain 2-40 / ATCC 43961 / DSM 17024).